A 256-amino-acid chain; its full sequence is Proteasome subunit alpha (256 aa).

Residues 226–256 are disordered; sequence LLPSQEESGSTDGEASGDAGDDKKTGDDKKS. A compositionally biased stretch (basic and acidic residues) spans 245 to 256; it reads GDDKKTGDDKKS.

Belongs to the peptidase T1A family. The 20S proteasome core is composed of 14 alpha and 14 beta subunits that assemble into four stacked heptameric rings, resulting in a barrel-shaped structure. The two inner rings, each composed of seven catalytic beta subunits, are sandwiched by two outer rings, each composed of seven alpha subunits. The catalytic chamber with the active sites is on the inside of the barrel. Has a gated structure, the ends of the cylinder being occluded by the N-termini of the alpha-subunits. Is capped by the proteasome-associated ATPase, ARC.

The protein resides in the cytoplasm. It functions in the pathway protein degradation; proteasomal Pup-dependent pathway. Its activity is regulated as follows. The formation of the proteasomal ATPase ARC-20S proteasome complex, likely via the docking of the C-termini of ARC into the intersubunit pockets in the alpha-rings, may trigger opening of the gate for substrate entry. Interconversion between the open-gate and close-gate conformations leads to a dynamic regulation of the 20S proteasome proteolysis activity. Functionally, component of the proteasome core, a large protease complex with broad specificity involved in protein degradation. The chain is Proteasome subunit alpha from Saccharopolyspora erythraea (strain ATCC 11635 / DSM 40517 / JCM 4748 / NBRC 13426 / NCIMB 8594 / NRRL 2338).